A 371-amino-acid chain; its full sequence is Bifunctional enzyme IspD/IspF (371 aa).

The segment at 1–210 is 2-C-methyl-D-erythritol 4-phosphate cytidylyltransferase; that stretch reads MSEISLIMLA…LDLPKPSFEI (210 aa). The 2-C-methyl-D-erythritol 2,4-cyclodiphosphate synthase stretch occupies residues 211–371; sequence FTGNGFDVHE…NLKYFDWTRL (161 aa). A divalent metal cation contacts are provided by Asp-217 and His-219. 4-CDP-2-C-methyl-D-erythritol 2-phosphate-binding positions include 217-219 and 243-244; these read DVH and HS. His-251 is a binding site for a divalent metal cation. Residues 265 to 267, 270 to 274, 341 to 344, Phe-348, and Arg-351 each bind 4-CDP-2-C-methyl-D-erythritol 2-phosphate; these read DIG, YPDTD, and TTTE.

It in the N-terminal section; belongs to the IspD/TarI cytidylyltransferase family. IspD subfamily. This sequence in the C-terminal section; belongs to the IspF family. It depends on a divalent metal cation as a cofactor.

The catalysed reaction is 2-C-methyl-D-erythritol 4-phosphate + CTP + H(+) = 4-CDP-2-C-methyl-D-erythritol + diphosphate. It carries out the reaction 4-CDP-2-C-methyl-D-erythritol 2-phosphate = 2-C-methyl-D-erythritol 2,4-cyclic diphosphate + CMP. The protein operates within isoprenoid biosynthesis; isopentenyl diphosphate biosynthesis via DXP pathway; isopentenyl diphosphate from 1-deoxy-D-xylulose 5-phosphate: step 2/6. It participates in isoprenoid biosynthesis; isopentenyl diphosphate biosynthesis via DXP pathway; isopentenyl diphosphate from 1-deoxy-D-xylulose 5-phosphate: step 4/6. Its function is as follows. Bifunctional enzyme that catalyzes the formation of 4-diphosphocytidyl-2-C-methyl-D-erythritol from CTP and 2-C-methyl-D-erythritol 4-phosphate (MEP) (IspD), and catalyzes the conversion of 4-diphosphocytidyl-2-C-methyl-D-erythritol 2-phosphate (CDP-ME2P) to 2-C-methyl-D-erythritol 2,4-cyclodiphosphate (ME-CPP) with a corresponding release of cytidine 5-monophosphate (CMP) (IspF). In Campylobacter jejuni subsp. doylei (strain ATCC BAA-1458 / RM4099 / 269.97), this protein is Bifunctional enzyme IspD/IspF.